A 199-amino-acid chain; its full sequence is MGDPKFHHKKYSTPRHPWEKERIDEENKIVVKYGLKNKKEIWRSEALLSSIRSQARDLRARLRTNDVNAQKQLERMIKRLNRYKLLSENATLDDVLSLTVENILDRRLQTIVFRKNLAISVRQARQLITHGHISVAGRRVTVPGMLVEAKDEDTIAYEENSPVANELHPIRQALLAPAQRSAEMKEGQGEASEEGETDE.

The 65-residue stretch at 106–170 (RRLQTIVFRK…SPVANELHPI (65 aa)) folds into the S4 RNA-binding domain. Residues 177–199 (PAQRSAEMKEGQGEASEEGETDE) are disordered.

It belongs to the universal ribosomal protein uS4 family. Part of the 30S ribosomal subunit. Contacts protein S5. The interaction surface between S4 and S5 is involved in control of translational fidelity.

In terms of biological role, one of the primary rRNA binding proteins, it binds directly to 16S rRNA where it nucleates assembly of the body of the 30S subunit. With S5 and S12 plays an important role in translational accuracy. The sequence is that of Small ribosomal subunit protein uS4 from Thermoplasma acidophilum (strain ATCC 25905 / DSM 1728 / JCM 9062 / NBRC 15155 / AMRC-C165).